Reading from the N-terminus, the 280-residue chain is Putative pyruvate, phosphate dikinase regulatory protein (280 aa).

154–161 serves as a coordination point for ADP; that stretch reads GVSRTSKT.

The protein belongs to the pyruvate, phosphate/water dikinase regulatory protein family. PDRP subfamily.

The catalysed reaction is N(tele)-phospho-L-histidyl/L-threonyl-[pyruvate, phosphate dikinase] + ADP = N(tele)-phospho-L-histidyl/O-phospho-L-threonyl-[pyruvate, phosphate dikinase] + AMP + H(+). It catalyses the reaction N(tele)-phospho-L-histidyl/O-phospho-L-threonyl-[pyruvate, phosphate dikinase] + phosphate + H(+) = N(tele)-phospho-L-histidyl/L-threonyl-[pyruvate, phosphate dikinase] + diphosphate. Its function is as follows. Bifunctional serine/threonine kinase and phosphorylase involved in the regulation of the pyruvate, phosphate dikinase (PPDK) by catalyzing its phosphorylation/dephosphorylation. The polypeptide is Putative pyruvate, phosphate dikinase regulatory protein (Nitrobacter winogradskyi (strain ATCC 25391 / DSM 10237 / CIP 104748 / NCIMB 11846 / Nb-255)).